The sequence spans 549 residues: CTP synthase (549 aa).

The tract at residues 1–272 (MPPKSSTTKH…DAYVVRRMDL (272 aa)) is amidoligase domain. S19 is a CTP binding site. S19 provides a ligand contact to UTP. Residues 20-25 (SLGKGL) and D77 contribute to the ATP site. Residues D77 and E146 each coordinate Mg(2+). CTP contacts are provided by residues 153–155 (DIE), 193–198 (KTKPTQ), and K229. UTP-binding positions include 193–198 (KTKPTQ) and K229. In terms of domain architecture, Glutamine amidotransferase type-1 spans 301 to 548 (VGKYIDLPDA…VKAAVERKTS (248 aa)). G360 serves as a coordination point for L-glutamine. C387 functions as the Nucleophile; for glutamine hydrolysis in the catalytic mechanism. L-glutamine-binding positions include 388-391 (LGLQ), E411, and R473. Active-site residues include H521 and E523.

This sequence belongs to the CTP synthase family. Homotetramer.

It catalyses the reaction UTP + L-glutamine + ATP + H2O = CTP + L-glutamate + ADP + phosphate + 2 H(+). It carries out the reaction L-glutamine + H2O = L-glutamate + NH4(+). The enzyme catalyses UTP + NH4(+) + ATP = CTP + ADP + phosphate + 2 H(+). It participates in pyrimidine metabolism; CTP biosynthesis via de novo pathway; CTP from UDP: step 2/2. With respect to regulation, allosterically activated by GTP, when glutamine is the substrate; GTP has no effect on the reaction when ammonia is the substrate. The allosteric effector GTP functions by stabilizing the protein conformation that binds the tetrahedral intermediate(s) formed during glutamine hydrolysis. Inhibited by the product CTP, via allosteric rather than competitive inhibition. Functionally, catalyzes the ATP-dependent amination of UTP to CTP with either L-glutamine or ammonia as the source of nitrogen. Regulates intracellular CTP levels through interactions with the four ribonucleotide triphosphates. The sequence is that of CTP synthase from Streptomyces coelicolor (strain ATCC BAA-471 / A3(2) / M145).